Reading from the N-terminus, the 111-residue chain is Thiosulfate sulfurtransferase GlpE (111 aa).

The 89-residue stretch at Gln-16 to Thr-104 folds into the Rhodanese domain. Cys-64 serves as the catalytic Cysteine persulfide intermediate.

The protein belongs to the GlpE family.

It localises to the cytoplasm. It carries out the reaction thiosulfate + hydrogen cyanide = thiocyanate + sulfite + 2 H(+). The enzyme catalyses thiosulfate + [thioredoxin]-dithiol = [thioredoxin]-disulfide + hydrogen sulfide + sulfite + 2 H(+). Its function is as follows. Transferase that catalyzes the transfer of sulfur from thiosulfate to thiophilic acceptors such as cyanide or dithiols. May function in a CysM-independent thiosulfate assimilation pathway by catalyzing the conversion of thiosulfate to sulfite, which can then be used for L-cysteine biosynthesis. This Actinobacillus succinogenes (strain ATCC 55618 / DSM 22257 / CCUG 43843 / 130Z) protein is Thiosulfate sulfurtransferase GlpE.